The sequence spans 658 residues: Glycine--tRNA ligase beta subunit (658 aa).

Belongs to the class-II aminoacyl-tRNA synthetase family. Tetramer of two alpha and two beta subunits.

It is found in the cytoplasm. The catalysed reaction is tRNA(Gly) + glycine + ATP = glycyl-tRNA(Gly) + AMP + diphosphate. The chain is Glycine--tRNA ligase beta subunit from Rickettsia bellii (strain OSU 85-389).